We begin with the raw amino-acid sequence, 230 residues long: MILTTARLNCRPVTVPRLFNRSFSQSFIILKKKSSTPTEKVEEDEIDVNELLKKAETQFKKTLEIQKQKMNEIKQGNFNPKVFNSLVFKNNRKFTDIATTSLKGKNALLITVFDPKDVKTVISGVLAANLNLTPERVPNNDLQLKVSLPPPTTESRLKVAKDLKRVFEEYKQSSLKDSLGTIRGSILKEFKSFKKDDAVRKAERDLEKLHKDYVNKLHDQFQKVEKSIVK.

A mitochondrion-targeting transit peptide spans 1–24 (MILTTARLNCRPVTVPRLFNRSFS).

This sequence belongs to the RRF family.

Its subcellular location is the mitochondrion. Necessary for protein synthesis in mitochondria. Functions as a ribosome recycling factor in mitochondria. The polypeptide is Ribosome-recycling factor, mitochondrial (RRF1) (Saccharomyces cerevisiae (strain ATCC 204508 / S288c) (Baker's yeast)).